A 196-amino-acid chain; its full sequence is Small ribosomal subunit protein uS5 (196 aa).

The S5 DRBM domain occupies 17–80; sequence FEEKMLFVNR…AVARKNMITV (64 aa). The interval 164–196 is disordered; it reads GTEVRPSLSSDSPAGRSATTEAGEGVADTGGMQ. Polar residues predominate over residues 170 to 183; that stretch reads SLSSDSPAGRSATT.

The protein belongs to the universal ribosomal protein uS5 family. Part of the 30S ribosomal subunit. Contacts proteins S4 and S8.

Its function is as follows. With S4 and S12 plays an important role in translational accuracy. In terms of biological role, located at the back of the 30S subunit body where it stabilizes the conformation of the head with respect to the body. This chain is Small ribosomal subunit protein uS5, found in Deinococcus radiodurans (strain ATCC 13939 / DSM 20539 / JCM 16871 / CCUG 27074 / LMG 4051 / NBRC 15346 / NCIMB 9279 / VKM B-1422 / R1).